Reading from the N-terminus, the 391-residue chain is Xylose isomerase (391 aa).

Catalysis depends on residues His54 and Asp57. The Mg(2+) site is built by Glu181, Glu217, His220, Asp245, Asp255, Asp257, and Asp287.

This sequence belongs to the xylose isomerase family. As to quaternary structure, homotetramer. The cofactor is Mg(2+).

Its subcellular location is the cytoplasm. It catalyses the reaction alpha-D-xylose = alpha-D-xylulofuranose. Functionally, involved in D-xylose catabolism. The sequence is that of Xylose isomerase (xylA) from Streptomyces albus G.